Consider the following 107-residue polypeptide: Thioredoxin (107 aa).

Residues 2–107 (SVSQVTDASF…LESTLNKYIS (106 aa)) form the Thioredoxin domain. Residues Cys-31 and Cys-34 each act as nucleophile in the active site. An intrachain disulfide couples Cys-31 to Cys-34.

It belongs to the thioredoxin family.

The protein resides in the plastid. It is found in the chloroplast. Functionally, participates in various redox reactions through the reversible oxidation of its active center dithiol to a disulfide and catalyzes dithiol-disulfide exchange reactions. The sequence is that of Thioredoxin (trxA) from Porphyra purpurea (Red seaweed).